The chain runs to 125 residues: Fluoride-specific ion channel FluC (125 aa).

The next 4 helical transmembrane spans lie at 4–24 (WLFVAAGGAIGACLRFGISEL), 35–55 (YGTLVVNVVGSFIMGIAFALI), 69–89 (LMVGILGALTTFSSFALDTVV), and 103–123 (MGLNLSLCLAMVLLGMQLVAS). Residues glycine 75 and threonine 78 each coordinate Na(+).

Belongs to the fluoride channel Fluc/FEX (TC 1.A.43) family.

The protein resides in the cell inner membrane. The enzyme catalyses fluoride(in) = fluoride(out). With respect to regulation, na(+) is not transported, but it plays an essential structural role and its presence is essential for fluoride channel function. Fluoride-specific ion channel. Important for reducing fluoride concentration in the cell, thus reducing its toxicity. In Aeromonas salmonicida (strain A449), this protein is Fluoride-specific ion channel FluC.